The primary structure comprises 389 residues: Ankyrin repeat domain-containing protein 42 (389 aa).

The disordered stretch occupies residues 1 to 21 (MPGVANSGPSTSSRETANPCS). Polar residues predominate over residues 7 to 19 (SGPSTSSRETANP). ANK repeat units lie at residues 25–60 (VHFG…DITH), 64–93 (RGWT…NLTA), 97–126 (RGCT…DPSV), 130–159 (REWR…SIED), 163–192 (NGNL…SATQ), 200–232 (NGEN…DLED), 235–265 (TLAF…NINE), 269–298 (NGST…DSNI), and 302–332 (AGER…DIDD).

This is Ankyrin repeat domain-containing protein 42 (ANKRD42) from Homo sapiens (Human).